The primary structure comprises 303 residues: Glutathione transport system permease protein GsiD (303 aa).

Transmembrane regions (helical) follow at residues 40–60, 105–125, 144–164, 165–185, 222–242, and 266–286; these read AMTAALFVILLIVVAIFARWI, LAAGVFAVFIGVAIGTLLGLL, LFAFPGILLAIAVVAVLGSGI, ANVIIAVAIFSIPAFARLVRG, IVVFFTMRIGTSIISAASLSF, and VIAPHVAVFPALAIFLTVLAF. An ABC transmembrane type-1 domain is found at 101–290; that stretch reads AQISLAAGVF…LTVLAFNLLG (190 aa).

The protein belongs to the binding-protein-dependent transport system permease family. In terms of assembly, the complex is composed of two ATP-binding proteins (GsiA), two transmembrane proteins (GsiC and GsiD) and a solute-binding protein (GsiB).

It is found in the cell inner membrane. Part of the ABC transporter complex GsiABCD involved in glutathione import. Probably responsible for the translocation of the substrate across the membrane. The protein is Glutathione transport system permease protein GsiD of Shigella flexneri serotype 5b (strain 8401).